A 248-amino-acid chain; its full sequence is Oligo(A)/oligo(T)-binding protein (248 aa).

The DNA-binding element occupies 1 to 36; sequence MAKTLAQGRKPGSGRKPGKGKTLREGRKPGSGRRRR. Disordered stretches follow at residues 1-127 and 219-248; these read MAKT…LQQQ and TAAS…NATI. A run of 3 repeats spans residues 8–12, 14–18, and 26–30. The segment at 8–30 is 3 X 5 AA repeats of G-R-K-P-G; sequence GRKPGSGRKPGKGKTLREGRKPG. Positions 12–21 are enriched in basic residues; that stretch reads GSGRKPGKGK. Basic and acidic residues predominate over residues 37–71; it reads QDTGGKETDGSQQDQESRLISSRDMEAVDALRELT. Composition is skewed to low complexity over residues 72-100 and 111-127; these read HSPS…LPPS and QQQQ…LQQQ.

Binds as a dimer or higher oligomer.

Its function is as follows. DNA-binding protein that recognizes oligo(A).oligo(T) tracts (A.T DNA). Can bind to any 11 bp sequence in which 10 bases conform to an uninterrupted oligo(A).oligo(T) tract. The polypeptide is Oligo(A)/oligo(T)-binding protein (DAT1) (Saccharomyces cerevisiae (strain ATCC 204508 / S288c) (Baker's yeast)).